The following is a 677-amino-acid chain: Methionine--tRNA ligase (677 aa).

A 'HIGH' region motif is present at residues 15–25 (PYANGSIHLGH). Zn(2+) contacts are provided by C146, C149, C159, and C162. The 'KMSKS' region signature appears at 333 to 337 (KMSKS). K336 serves as a coordination point for ATP. The region spanning 575 to 677 (DFAKIDLRVA…DGAKPGQQVK (103 aa)) is the tRNA-binding domain.

It belongs to the class-I aminoacyl-tRNA synthetase family. MetG type 1 subfamily. Homodimer. Requires Zn(2+) as cofactor.

It localises to the cytoplasm. The enzyme catalyses tRNA(Met) + L-methionine + ATP = L-methionyl-tRNA(Met) + AMP + diphosphate. Is required not only for elongation of protein synthesis but also for the initiation of all mRNA translation through initiator tRNA(fMet) aminoacylation. The sequence is that of Methionine--tRNA ligase from Salmonella typhi.